A 70-amino-acid chain; its full sequence is Translational regulator CsrA (70 aa).

This sequence belongs to the CsrA/RsmA family. As to quaternary structure, homodimer; the beta-strands of each monomer intercalate to form a hydrophobic core, while the alpha-helices form wings that extend away from the core.

The protein resides in the cytoplasm. In terms of biological role, a key translational regulator that binds mRNA to regulate translation initiation and/or mRNA stability. Mediates global changes in gene expression, shifting from rapid growth to stress survival by linking envelope stress, the stringent response and the catabolite repression systems. Usually binds in the 5'-UTR; binding at or near the Shine-Dalgarno sequence prevents ribosome-binding, repressing translation, binding elsewhere in the 5'-UTR can activate translation and/or stabilize the mRNA. Its function is antagonized by small RNA(s). This Hydrogenovibrio crunogenus (strain DSM 25203 / XCL-2) (Thiomicrospira crunogena) protein is Translational regulator CsrA.